Consider the following 206-residue polypeptide: MSKSYTLKAEIRERVGKGSSRELRRNGLIPAVIYGDKQPPLAIAVSYKDIFYKIHAGGFRTTVATLAIDKQKIMVLPKDYQLDPVRDFPLHVDFLRISAKSIVEVNIPVHFLNEDSAPGLKKGGVLNIVRHEIECTAPANAIPEAIEIDLSSYSIGDSIHISAVQLPKDVNPVIQDRDFTIATIVAPADMDVSDEVSEQENNEESE.

It belongs to the bacterial ribosomal protein bL25 family. CTC subfamily. Part of the 50S ribosomal subunit; part of the 5S rRNA/L5/L18/L25 subcomplex. Contacts the 5S rRNA. Binds to the 5S rRNA independently of L5 and L18.

Its function is as follows. This is one of the proteins that binds to the 5S RNA in the ribosome where it forms part of the central protuberance. This Bartonella henselae (strain ATCC 49882 / DSM 28221 / CCUG 30454 / Houston 1) (Rochalimaea henselae) protein is Large ribosomal subunit protein bL25.